We begin with the raw amino-acid sequence, 287 residues long: Ethanolamine ammonia-lyase small subunit (287 aa).

Residues Val-168, Glu-189, and Cys-218 each contribute to the adenosylcob(III)alamin site.

This sequence belongs to the EutC family. The basic unit is a heterodimer which dimerizes to form tetramers. The heterotetramers trimerize; 6 large subunits form a core ring with 6 small subunits projecting outwards. Requires adenosylcob(III)alamin as cofactor.

Its subcellular location is the bacterial microcompartment. The enzyme catalyses ethanolamine = acetaldehyde + NH4(+). Its pathway is amine and polyamine degradation; ethanolamine degradation. Its function is as follows. Catalyzes the deamination of various vicinal amino-alcohols to oxo compounds. Allows this organism to utilize ethanolamine as the sole source of nitrogen and carbon in the presence of external vitamin B12. The polypeptide is Ethanolamine ammonia-lyase small subunit (Pseudomonas syringae pv. tomato (strain ATCC BAA-871 / DC3000)).